The sequence spans 211 residues: Imidazole glycerol phosphate synthase subunit HisH (211 aa).

The region spanning 1-206 (MIGIIDYGRG…GKWVNEDATV (206 aa)) is the Glutamine amidotransferase type-1 domain. Residue cysteine 79 is the Nucleophile of the active site. Residues histidine 181 and glutamate 183 contribute to the active site.

As to quaternary structure, heterodimer of HisH and HisF.

Its subcellular location is the cytoplasm. The catalysed reaction is 5-[(5-phospho-1-deoxy-D-ribulos-1-ylimino)methylamino]-1-(5-phospho-beta-D-ribosyl)imidazole-4-carboxamide + L-glutamine = D-erythro-1-(imidazol-4-yl)glycerol 3-phosphate + 5-amino-1-(5-phospho-beta-D-ribosyl)imidazole-4-carboxamide + L-glutamate + H(+). It catalyses the reaction L-glutamine + H2O = L-glutamate + NH4(+). It functions in the pathway amino-acid biosynthesis; L-histidine biosynthesis; L-histidine from 5-phospho-alpha-D-ribose 1-diphosphate: step 5/9. In terms of biological role, IGPS catalyzes the conversion of PRFAR and glutamine to IGP, AICAR and glutamate. The HisH subunit catalyzes the hydrolysis of glutamine to glutamate and ammonia as part of the synthesis of IGP and AICAR. The resulting ammonia molecule is channeled to the active site of HisF. This is Imidazole glycerol phosphate synthase subunit HisH from Desulfitobacterium hafniense (strain Y51).